Here is a 543-residue protein sequence, read N- to C-terminus: Bifunctional riboflavin biosynthesis protein RIBA 1, chloroplastic (543 aa).

The N-terminal 56 residues, 1-56, are a transit peptide targeting the chloroplast; that stretch reads MSSINLSSSSPSTISLSRSRLSQSSTTLLHGLHRVTLPSNHPLSTFSIKTNTGKVK. Residues 57 to 328 are DHBP synthase; that stretch reads AAVISREDDL…IADLIRYRRK (272 aa). D-ribulose 5-phosphate-binding positions include 152 to 153, Asp157, 267 to 271, and Glu291; these read RE and RAGHT. A Mg(2+)-binding site is contributed by Glu153. His270 serves as a coordination point for Mg(2+). The tract at residues 329–543 is GTP cyclohydrolase II; sequence RDKLVERASA…VEKIESESES (215 aa). Residue 379-383 coordinates GTP; that stretch reads RVHSE. Residues Cys384, Cys395, and Cys397 each coordinate Zn(2+). Residues Gln400, 423 to 425, and Thr445 contribute to the GTP site; that span reads EGR. Asp457 acts as the Proton acceptor; for GTP cyclohydrolase activity in catalysis. The Nucleophile; for GTP cyclohydrolase activity role is filled by Arg459. Residues Thr480 and Lys485 each contribute to the GTP site.

It in the N-terminal section; belongs to the DHBP synthase family. In the C-terminal section; belongs to the GTP cyclohydrolase II family. Requires Mg(2+) as cofactor. It depends on Mn(2+) as a cofactor. Zn(2+) serves as cofactor. Expressed in leaves, shoots, roots, flowers and siliques.

The protein resides in the plastid. The protein localises to the chloroplast. The catalysed reaction is D-ribulose 5-phosphate = (2S)-2-hydroxy-3-oxobutyl phosphate + formate + H(+). The enzyme catalyses GTP + 4 H2O = 2,5-diamino-6-hydroxy-4-(5-phosphoribosylamino)-pyrimidine + formate + 2 phosphate + 3 H(+). It functions in the pathway cofactor biosynthesis; riboflavin biosynthesis; 2-hydroxy-3-oxobutyl phosphate from D-ribulose 5-phosphate: step 1/1. Its pathway is cofactor biosynthesis; riboflavin biosynthesis; 5-amino-6-(D-ribitylamino)uracil from GTP: step 1/4. Involved in riboflavin biosynthesis. Catalyzes both the conversion of D-ribulose 5-phosphate to formate and 3,4-dihydroxy-2-butanone 4-phosphate and the conversion of GTP to 2,5-diamino-6-ribosylamino-4(3H)-pyrimidinone 5'-phosphate (DARP), formate and pyrophosphate. RIBA2 and RIBA3 together are not able to complement the loss of function of RIBA1. In Arabidopsis thaliana (Mouse-ear cress), this protein is Bifunctional riboflavin biosynthesis protein RIBA 1, chloroplastic (RIBA1).